Consider the following 316-residue polypeptide: Aspartate carbamoyltransferase catalytic subunit (316 aa).

Carbamoyl phosphate is bound by residues Arg-56 and Thr-57. Lys-84 serves as a coordination point for L-aspartate. Carbamoyl phosphate-binding residues include Arg-106, His-139, and Gln-142. L-aspartate-binding residues include Arg-172 and Arg-226. Residues Gly-267 and Pro-268 each coordinate carbamoyl phosphate.

This sequence belongs to the aspartate/ornithine carbamoyltransferase superfamily. ATCase family. As to quaternary structure, heterododecamer (2C3:3R2) of six catalytic PyrB chains organized as two trimers (C3), and six regulatory PyrI chains organized as three dimers (R2).

It carries out the reaction carbamoyl phosphate + L-aspartate = N-carbamoyl-L-aspartate + phosphate + H(+). The protein operates within pyrimidine metabolism; UMP biosynthesis via de novo pathway; (S)-dihydroorotate from bicarbonate: step 2/3. Catalyzes the condensation of carbamoyl phosphate and aspartate to form carbamoyl aspartate and inorganic phosphate, the committed step in the de novo pyrimidine nucleotide biosynthesis pathway. This chain is Aspartate carbamoyltransferase catalytic subunit, found in Mycobacterium sp. (strain MCS).